The following is a 492-amino-acid chain: Catalase (492 aa).

Catalysis depends on residues histidine 65 and asparagine 138. Residue tyrosine 348 participates in heme binding.

It belongs to the catalase family. As to quaternary structure, homotetramer. It depends on heme as a cofactor. In terms of tissue distribution, in stems, leaves, roots and developing fruits.

It is found in the cytoplasm. Its subcellular location is the cytosol. The protein localises to the peroxisome matrix. It carries out the reaction 2 H2O2 = O2 + 2 H2O. In terms of biological role, catalyzes the degradation of hydrogen peroxide (H(2)O(2)) generated by peroxisomal oxidases to water and oxygen, thereby protecting cells from the toxic effects of hydrogen peroxide. The polypeptide is Catalase (CAT) (Capsicum annuum (Capsicum pepper)).